A 131-amino-acid polypeptide reads, in one-letter code: uncharacterized protein (131 aa).

Positions 13–32 are disordered; that stretch reads TYSPLPEPPPTPALGGQRGP.

This is an uncharacterized protein from Homo sapiens (Human).